Consider the following 211-residue polypeptide: Large ribosomal subunit protein uL4 (211 aa).

The span at 41–53 shows a compositional bias: polar residues; it reads QAHSRQGTASTLT. Residues 41 to 78 are disordered; the sequence is QAHSRQGTASTLTRAEVRGGGRKPYKQKGTGRARQGTI. Residues 60-71 are compositionally biased toward basic residues; the sequence is GGRKPYKQKGTG.

Belongs to the universal ribosomal protein uL4 family. As to quaternary structure, part of the 50S ribosomal subunit.

Functionally, one of the primary rRNA binding proteins, this protein initially binds near the 5'-end of the 23S rRNA. It is important during the early stages of 50S assembly. It makes multiple contacts with different domains of the 23S rRNA in the assembled 50S subunit and ribosome. Forms part of the polypeptide exit tunnel. This is Large ribosomal subunit protein uL4 from Prochlorococcus marinus (strain MIT 9313).